The chain runs to 62 residues: Large ribosomal subunit protein eL37 (62 aa).

Residues C20, C23, C35, and C38 each contribute to the Zn(2+) site. The segment at 20-38 (CRRCGRRSYHVRKKACSAC) adopts a C4-type zinc-finger fold.

The protein belongs to the eukaryotic ribosomal protein eL37 family. Zn(2+) serves as cofactor.

Its function is as follows. Binds to the 23S rRNA. The protein is Large ribosomal subunit protein eL37 of Methanococcus aeolicus (strain ATCC BAA-1280 / DSM 17508 / OCM 812 / Nankai-3).